Reading from the N-terminus, the 119-residue chain is Ribonuclease P protein component (119 aa).

The protein belongs to the RnpA family. In terms of assembly, consists of a catalytic RNA component (M1 or rnpB) and a protein subunit.

The enzyme catalyses Endonucleolytic cleavage of RNA, removing 5'-extranucleotides from tRNA precursor.. Functionally, RNaseP catalyzes the removal of the 5'-leader sequence from pre-tRNA to produce the mature 5'-terminus. It can also cleave other RNA substrates such as 4.5S RNA. The protein component plays an auxiliary but essential role in vivo by binding to the 5'-leader sequence and broadening the substrate specificity of the ribozyme. The chain is Ribonuclease P protein component from Streptococcus mutans serotype c (strain ATCC 700610 / UA159).